Reading from the N-terminus, the 301-residue chain is Quinolinate synthase (301 aa).

Residues histidine 21 and serine 38 each coordinate iminosuccinate. Cysteine 83 contributes to the [4Fe-4S] cluster binding site. Iminosuccinate-binding positions include 109 to 111 (YIN) and serine 126. Cysteine 169 contributes to the [4Fe-4S] cluster binding site. Iminosuccinate contacts are provided by residues 195–197 (HPE) and threonine 212. Cysteine 257 is a binding site for [4Fe-4S] cluster.

This sequence belongs to the quinolinate synthase family. Type 2 subfamily. [4Fe-4S] cluster serves as cofactor.

Its subcellular location is the cytoplasm. The enzyme catalyses iminosuccinate + dihydroxyacetone phosphate = quinolinate + phosphate + 2 H2O + H(+). It functions in the pathway cofactor biosynthesis; NAD(+) biosynthesis; quinolinate from iminoaspartate: step 1/1. Functionally, catalyzes the condensation of iminoaspartate with dihydroxyacetone phosphate to form quinolinate. The sequence is that of Quinolinate synthase from Clostridium perfringens (strain SM101 / Type A).